The sequence spans 66 residues: Large ribosomal subunit protein bL35 (66 aa).

The disordered stretch occupies residues 1 to 22 (MAYKLKSHRGAAKRFKKTASGG).

Belongs to the bacterial ribosomal protein bL35 family.

The protein is Large ribosomal subunit protein bL35 of Pseudoalteromonas translucida (strain TAC 125).